The following is a 4468-amino-acid chain: Replicase polyprotein 1a (4468 aa).

A CoV Nsp1 globular domain is found at 54–196; the sequence is LVNHVRVNCS…PWSILLRKGG (143 aa). One can recognise a BetaCoV Nsp1 C-terminal domain in the interval 217-247; that stretch reads FNVEDACEEVHLNPKGKYSCKAYALLKGYRG. Positions 251–511 constitute a CoV Nsp2 N-terminal domain; it reads ILFVDQYGCD…TDAICRSLYM (261 aa). The Zn(2+) site is built by cysteine 390, cysteine 395, cysteine 411, and cysteine 414. A C4 region spans residues 390 to 414; sequence CCGDTCDFRGWVAGNMMDGFPCPGC. Residues 518–706 form the CoV Nsp2 middle domain; the sequence is CGNLEQRAIL…VDKFKAFFKV (189 aa). A CoV Nsp2 C-terminal domain is found at 726–832; that stretch reads SNRVCLAGSK…LDQCWRFPCA (107 aa). One can recognise a Ubiquitin-like 1 domain in the interval 834–946; sequence KKVEFNDKPK…MYCSFSAPDD (113 aa). The disordered stretch occupies residues 999–1027; the sequence is SQEELAEPDAVGSQTPIASAEETEVGEAS. A Peptidase C16 1 domain is found at 1084-1333; the sequence is AFDAVCSEAL…VCFVKGDVIK (250 aa). The active-site For PL1-PRO activity is cysteine 1121. Residues cysteine 1198, cysteine 1201, cysteine 1224, and cysteine 1226 each coordinate Zn(2+). Residues 1198–1226 form a C4-type 1 zinc finger; the sequence is CLECDMELKLQGLDAMFFYGDVVSHMCKC. Active-site for PL1-PRO activity residues include histidine 1272 and aspartate 1283. Positions 1323–1482 constitute a Macro domain; sequence NVCFVKGDVI…VIEKCQVTSV (160 aa). One can recognise a DPUP domain in the interval 1537–1609; sequence DDARVFVQAN…VSQIRALLAN (73 aa). A Ubiquitin-like 2 domain is found at 1608–1663; the sequence is ANKVDVLCTVDGVNFRSCCVAEGEVFGKTLGSVFCDGINVTKVRCSAIYKGKVFFQ. A Peptidase C16 2 domain is found at 1678-1937; sequence AFGFDEPQLL…CVEYKPDLSQ (260 aa). Cysteine 1716 acts as the For PL2-PRO activity in catalysis. 4 residues coordinate Zn(2+): cysteine 1794, cysteine 1796, cysteine 1828, and cysteine 1830. The C4-type 2 zinc-finger motif lies at 1794–1830; that stretch reads CKCGVKQEQRKGVDAVMHFGTLDKGDLVRGYNIACTC. Catalysis depends on for PL2-PRO activity residues histidine 1873 and aspartate 1887. The 102-residue stretch at 1951–2052 folds into the Nucleic acid-binding domain; it reads IKAQFRTFEK…TYFNRPSVVC (102 aa). Residues 2107–2256 enclose the G2M domain; that stretch reads QVVTEVRQEP…TDNKVIYTTE (150 aa). The interval 2225-2645 is HD1; sequence AIACYCAVKW…QSLYRPMLMV (421 aa). 2 consecutive transmembrane segments (helical) span residues 2286–2306 and 2314–2334; these read FFLVATVFLLWFNFLYANVIL and IGPLPTFVGQIVAWFKTTFGV. In terms of domain architecture, 3Ecto spans 2322-2383; sequence GQIVAWFKTT…AINVVQHVVD (62 aa). 2 cysteine pairs are disulfide-bonded: cysteine 2338-cysteine 2362 and cysteine 2353-cysteine 2359. Helical transmembrane passes span 2400-2420 and 2442-2462; these read LVIGYSLYTVCFYPLFVLIGM and LFVFVANMLPAFTLLRFYIVV. A Y1 region spans residues 2470-2560; that stretch reads CLCRHVMYGC…ELKRPVNPTD (91 aa). The 368-residue stretch at 2470–2837 folds into the CoV Nsp3 Y domain; sequence CLCRHVMYGC…LTTPFSLKGG (368 aa). Zn(2+)-binding residues include histidine 2474, cysteine 2479, cysteine 2484, cysteine 2487, cysteine 2520, histidine 2523, cysteine 2527, and cysteine 2530. The interval 2474–2487 is ZF1; that stretch reads HVMYGCSKPGCLFC. Residues 2520 to 2530 form a ZF2 region; it reads CTKHQWNCLNC. The interval 2561–2653 is Y2; that stretch reads SAYYSVTEVK…MVEKKLITTA (93 aa). The tract at residues 2561–2837 is coV-Y; sequence SAYYSVTEVK…LTTPFSLKGG (277 aa). The helical transmembrane segment at 2625-2645 threads the bilayer; sequence AGFLGAAVFYAQSLYRPMLMV. Residues 2654–2736 form a Y3 region; that stretch reads NTGLSVSRTM…KSVMSAVNAG (83 aa). The interval 2737-2837 is Y4; the sequence is VDFTDESCNN…LTTPFSLKGG (101 aa). The next 6 helical transmembrane spans lie at 2847–2867, 3096–3116, 3118–3138, 3150–3170, 3177–3197, and 3202–3222; these read LFVANLICFIVLWALMPTYAV, AFDLIHQVLGGLVRPIDFFAL, ASSVAGAILAIIVVLAFYYLI, VVVINVIVWCINFLMLFVFQV, LYACFYFYTTLYFPSEISVVM, and LVMYGAIMPLWFCIIYVAVVV. Residues 2847–3222 are HD2; that stretch reads LFVANLICFI…FCIIYVAVVV (376 aa). The 98-residue stretch at 3236–3333 folds into the Nsp4C domain; the sequence is IGTEVRSDGT…TASVTTSFLQ (98 aa). The Peptidase C30 domain maps to 3334 to 3635; sequence SGIVKMVSPT…YQQLAGVKLQ (302 aa). Catalysis depends on for 3CL-PRO activity residues histidine 3374 and cysteine 3478. Positions 3526-3860 are HD3; the sequence is LPVQDYTQTV…VCCCYWGILS (335 aa). 7 helical membrane passes run 3644 to 3664, 3674 to 3694, 3699 to 3719, 3742 to 3762, 3769 to 3789, 3796 to 3816, and 3840 to 3860; these read GTCCWILASTFLFCSIISAFV, THMLGVTLCALCFVSFAMLLI, LYLTMYIMPVLCTFYTNYLVV, TYMDEVLYGVVLLVAMVFVTM, VFSIMFLVGRLVSLVSMWYFG, VLLFLTSLFGTYTWTTMLSLA, and LVLLSYLCIGYVCCCYWGILS. Residues 3922 to 4010 form the RdRp Nsp7 cofactor domain; that stretch reads SRLTDVKCAN…DYVRDNTVLQ (89 aa). The RdRp Nsp8 cofactor domain maps to 4011-4207; that stretch reads ALQSEFVNMA…HNEVSTVVLQ (197 aa). Residues 4208–4317 enclose the Nsp9 ssRNA-binding domain; the sequence is NNELMPQKLR…GTLSSTVRLQ (110 aa). The ExoN/MTase coactivator domain occupies 4318-4455; sequence AGTATEYASN…CVGTGSQFQS (138 aa). Zn(2+)-binding residues include cysteine 4391, cysteine 4394, histidine 4400, cysteine 4407, cysteine 4433, cysteine 4436, cysteine 4444, and cysteine 4446. Zinc fingers lie at residues 4391–4407 and 4433–4446; these read CIYCRSRVEHPDVDGLC and CQVCGFWRDGSCSC.

This sequence belongs to the coronaviruses polyprotein 1ab family. 3CL-PRO exists as monomer and homodimer. Eight copies of nsp7 and eight copies of nsp8 assemble to form a heterohexadecamer. Nsp9 is a dimer. Nsp10 forms a dodecamer. Post-translationally, specific enzymatic cleavages in vivo by its own proteases yield mature proteins. 3CL-PRO and PL-PRO proteinases are autocatalytically processed.

The protein resides in the host membrane. Its subcellular location is the host cytoplasm. It localises to the host perinuclear region. It carries out the reaction Thiol-dependent hydrolysis of ester, thioester, amide, peptide and isopeptide bonds formed by the C-terminal Gly of ubiquitin (a 76-residue protein attached to proteins as an intracellular targeting signal).. The enzyme catalyses TSAVLQ-|-SGFRK-NH2 and SGVTFQ-|-GKFKK the two peptides corresponding to the two self-cleavage sites of the SARS 3C-like proteinase are the two most reactive peptide substrates. The enzyme exhibits a strong preference for substrates containing Gln at P1 position and Leu at P2 position.. It catalyses the reaction a 5'-end diphospho-ribonucleoside in mRNA + GTP + H(+) = a 5'-end (5'-triphosphoguanosine)-ribonucleoside in mRNA + diphosphate. Its function is as follows. The papain-like proteinase 1 (PL1-PRO) and papain-like proteinase 2 (PL2-PRO) are responsible for the cleavages located at the N-terminus of the replicase polyprotein. In addition, PLP2 possesses a deubiquitinating/deISGylating activity and processes both 'Lys-48'- and 'Lys-63'-linked polyubiquitin chains from cellular substrates. Antagonizes innate immune induction of type I interferon by blocking the phosphorylation, dimerization and subsequent nuclear translocation of host IRF-3. In terms of biological role, responsible for the majority of cleavages as it cleaves the C-terminus of replicase polyprotein at 11 sites. Recognizes substrates containing the core sequence [ILMVF]-Q-|-[SGACN]. Inhibited by the substrate-analog Cbz-Val-Asn-Ser-Thr-Leu-Gln-CMK. Also contains an ADP-ribose-1''-phosphate (ADRP)-binding function. Functionally, nsp7-nsp8 hexadecamer may possibly confer processivity to the polymerase, maybe by binding to dsRNA or by producing primers utilized by the latter. Catalytic subunit of viral RNA capping enzyme which catalyzes the RNA guanylyltransferase reaction for genomic and sub-genomic RNAs. The kinase-like NiRAN domain of NSP12 transfers RNA to the amino terminus of NSP9, forming a covalent RNA-protein intermediate. Subsequently, the NiRAN domain transfers RNA to GDP, forming the core cap structure GpppA-RNA. The NSP14 and NSP16 methyltransferases then add methyl groups to form functional cap structures. Its function is as follows. Binds to the 40S ribosomal subunit and inhibits host translation. The nsp1-40S ribosome complex further induces an endonucleolytic cleavage near the 5'UTR of host mRNAs, targeting them for degradation. By suppressing host gene expression, nsp1 facilitates efficient viral gene expression in infected cells and evasion from host immune response. This Murine coronavirus (strain A59) (MHV-A59) protein is Replicase polyprotein 1a.